The following is a 245-amino-acid chain: Ubiquinone/menaquinone biosynthesis C-methyltransferase UbiE (245 aa).

S-adenosyl-L-methionine is bound by residues threonine 71, aspartate 92, and 118–119 (DA).

This sequence belongs to the class I-like SAM-binding methyltransferase superfamily. MenG/UbiE family.

It catalyses the reaction a 2-demethylmenaquinol + S-adenosyl-L-methionine = a menaquinol + S-adenosyl-L-homocysteine + H(+). The enzyme catalyses a 2-methoxy-6-(all-trans-polyprenyl)benzene-1,4-diol + S-adenosyl-L-methionine = a 5-methoxy-2-methyl-3-(all-trans-polyprenyl)benzene-1,4-diol + S-adenosyl-L-homocysteine + H(+). It participates in quinol/quinone metabolism; menaquinone biosynthesis; menaquinol from 1,4-dihydroxy-2-naphthoate: step 2/2. The protein operates within cofactor biosynthesis; ubiquinone biosynthesis. Functionally, methyltransferase required for the conversion of demethylmenaquinol (DMKH2) to menaquinol (MKH2) and the conversion of 2-polyprenyl-6-methoxy-1,4-benzoquinol (DDMQH2) to 2-polyprenyl-3-methyl-6-methoxy-1,4-benzoquinol (DMQH2). The protein is Ubiquinone/menaquinone biosynthesis C-methyltransferase UbiE of Neisseria meningitidis serogroup A / serotype 4A (strain DSM 15465 / Z2491).